The sequence spans 186 residues: Ribosome-recycling factor (186 aa).

It belongs to the RRF family.

The protein resides in the cytoplasm. Functionally, responsible for the release of ribosomes from messenger RNA at the termination of protein biosynthesis. May increase the efficiency of translation by recycling ribosomes from one round of translation to another. The sequence is that of Ribosome-recycling factor from Leifsonia xyli subsp. xyli (strain CTCB07).